Here is an 83-residue protein sequence, read N- to C-terminus: Large ribosomal subunit protein bL31B (83 aa).

The protein belongs to the bacterial ribosomal protein bL31 family. Type B subfamily. As to quaternary structure, part of the 50S ribosomal subunit.

The polypeptide is Large ribosomal subunit protein bL31B (Levilactobacillus brevis (strain ATCC 367 / BCRC 12310 / CIP 105137 / JCM 1170 / LMG 11437 / NCIMB 947 / NCTC 947) (Lactobacillus brevis)).